Reading from the N-terminus, the 231-residue chain is Sugar fermentation stimulation protein homolog (231 aa).

The protein belongs to the SfsA family.

This chain is Sugar fermentation stimulation protein homolog, found in Geotalea daltonii (strain DSM 22248 / JCM 15807 / FRC-32) (Geobacter daltonii).